Here is a 962-residue protein sequence, read N- to C-terminus: MPRSIWFKALLLFVALWAPLSQAETGWQPIQETIRKSDKDNRQYQAIRLDNGMVVLLVSDPQAVKSLSALVVPVGSLEDPEAYQGLAHYLEHMSLMGSKKYPQADSLAEYLKMHGGSHNASTAPYRTAFYLEVENDALPGAVDRLADAIAEPLLDKKYAERERNAVNAELTMARTRDGMRMAQVSAETINPAHPGSKFSGGNLETLSDKPGNPVQQALKDFHEKYYSANLMKAVIYSNKPLPELAKMAADTFGRVPNKESKKPEITVPVVTDAQKGIIIHYVPALPRKVLRVEFRIDNNSAKFRSKTDELITYLIGNRSPGTLSDWLQKQGLVEGISANSDPIVNGNSGVLAISASLTDKGLANRDQVVAAIFSYLNLLREKGIDKQYFDELANVLDIDFRYPSITRDMDYVEWLADTMIRVPVEHTLDAVNIADRYDAKAVKERLAMMTPQNARIWYISPKEPHNKTAYFVDAPYQVDKISEQTFADWQKKAANIALSLPELNPYIPDDFSLIKSEKKYDHPELIVDESNLRVVYAPSRYFASEPKADVSLILRNPKAMDSARNQVMFALNDYLAGLALDQLSNQASVGGISFSTNANNGLMVNANGYTQRLPQLFQALLEGYFSYTATEDQLEQAKSWYNQMMDSAEKGKAFEQAIMPAQMLSQVPYFSRDERRKILPSITLKEVLAYRDALKSGARPEFMVIGNMTEAQATTLARHVQKQLGADGSEWCRNKDVVVDKKQSVIFEKAGNSTDSALAAIFVPTGYDEYTSSAYSSLLGQIVQPWFYNQLRTEEQLGYAVFAFPMSVGRQWGMGFLLQSNDKQPSFLWERYKAFFPTAEAKLRTMKPEEFAQIQQAVITQMLQAPQTLGEEASKLSKDFDRGNMRFDSRDKIVAQIKLLTPQKLADFFHQAVVEPQGMAILSQISGSQNGKAEYVHPEGWKVWENVSALQQTMPLMSEKNE.

Residues 1–23 (MPRSIWFKALLLFVALWAPLSQA) form the signal peptide. A Zn(2+)-binding site is contributed by His88. The Proton acceptor role is filled by Glu91. The Zn(2+) site is built by His92 and Glu169.

The protein belongs to the peptidase M16 family. In terms of assembly, monomer. Zn(2+) serves as cofactor.

The protein resides in the periplasm. The enzyme catalyses Preferential cleavage of 16-Tyr-|-Leu-17 and 25-Phe-|-Tyr-26 bonds of oxidized insulin B chain. Also acts on other substrates of Mw less than 7 kDa such as insulin and glucagon.. Endopeptidase that degrades small peptides of less than 7 kDa, such as glucagon and insulin. The sequence is that of Protease 3 (ptrA) from Escherichia coli O6:H1 (strain CFT073 / ATCC 700928 / UPEC).